Reading from the N-terminus, the 156-residue chain is UPF0756 membrane protein Exig_2210 (156 aa).

5 consecutive transmembrane segments (helical) span residues 5-25 (LFLIGLVLIGVIAQNKSLIIA), 52-72 (WGVTLITAAILVPIATGDIGF), 83-103 (IGIISFLAGIFVAIIAAHGVG), 109-129 (PLVTTALLAGTILAVGLFRGV), and 131-151 (VGPLIGAGIAALVIGMWDIIV).

Belongs to the UPF0756 family.

Its subcellular location is the cell membrane. The chain is UPF0756 membrane protein Exig_2210 from Exiguobacterium sibiricum (strain DSM 17290 / CCUG 55495 / CIP 109462 / JCM 13490 / 255-15).